The chain runs to 104 residues: Large ribosomal subunit protein uL24 (104 aa).

The protein belongs to the universal ribosomal protein uL24 family. In terms of assembly, part of the 50S ribosomal subunit.

In terms of biological role, one of two assembly initiator proteins, it binds directly to the 5'-end of the 23S rRNA, where it nucleates assembly of the 50S subunit. Functionally, one of the proteins that surrounds the polypeptide exit tunnel on the outside of the subunit. This chain is Large ribosomal subunit protein uL24, found in Dichelobacter nodosus (strain VCS1703A).